The chain runs to 285 residues: Anamorsin homolog 1 (285 aa).

An N-terminal SAM-like domain region spans residues 1 to 150 (MEATVLLVTD…QKPTWETGSS (150 aa)). Residues 150–195 (SFSLKKKSVQKQESLPKPGALSVKPEMNVDLEDLIDEESLLSEEDL) form a linker region. Residues cysteine 206, cysteine 215, cysteine 218, and cysteine 220 each contribute to the [2Fe-2S] cluster site. Positions 206 to 220 (CEVSTKRKACKNCTC) are fe-S binding site A. [4Fe-4S] cluster is bound by residues cysteine 246, cysteine 249, cysteine 257, and cysteine 260. Short sequence motifs (cx2C motif) lie at residues 246–249 (CGNC) and 257–260 (CSSC). The tract at residues 246-260 (CGNCGLGDAFRCSSC) is fe-S binding site B.

This sequence belongs to the anamorsin family. Monomer. [2Fe-2S] cluster serves as cofactor. The cofactor is [4Fe-4S] cluster.

Its subcellular location is the cytoplasm. The protein localises to the mitochondrion intermembrane space. Its function is as follows. Component of the cytosolic iron-sulfur (Fe-S) protein assembly (CIA) machinery. Required for the maturation of extramitochondrial Fe-S proteins. Part of an electron transfer chain functioning in an early step of cytosolic Fe-S biogenesis, facilitating the de novo assembly of a [4Fe-4S] cluster on the cytosolic Fe-S scaffold complex. Electrons are transferred from NADPH via a FAD- and FMN-containing diflavin oxidoreductase. Together with the diflavin oxidoreductase, also required for the assembly of the diferric tyrosyl radical cofactor of ribonucleotide reductase (RNR), probably by providing electrons for reduction during radical cofactor maturation in the catalytic small subunit. In Picea sitchensis (Sitka spruce), this protein is Anamorsin homolog 1.